The following is a 189-amino-acid chain: GMP synthase [glutamine-hydrolyzing] subunit A (189 aa).

The Glutamine amidotransferase type-1 domain maps to 5–189; that stretch reads KILVVNNYGQ…TNFFEVCDRY (185 aa). The Nucleophile role is filled by Cys-79. Residues His-166 and Glu-168 contribute to the active site.

Heterodimer composed of a glutamine amidotransferase subunit (A) and a GMP-binding subunit (B).

The enzyme catalyses XMP + L-glutamine + ATP + H2O = GMP + L-glutamate + AMP + diphosphate + 2 H(+). It participates in purine metabolism; GMP biosynthesis; GMP from XMP (L-Gln route): step 1/1. In terms of biological role, catalyzes the synthesis of GMP from XMP. This chain is GMP synthase [glutamine-hydrolyzing] subunit A, found in Methanosarcina acetivorans (strain ATCC 35395 / DSM 2834 / JCM 12185 / C2A).